Reading from the N-terminus, the 149-residue chain is Deoxyuridine 5'-triphosphate nucleotidohydrolase (149 aa).

Residues 68-70 (RSG), Asn81, and 85-87 (LID) contribute to the substrate site.

Belongs to the dUTPase family. Requires Mg(2+) as cofactor.

The catalysed reaction is dUTP + H2O = dUMP + diphosphate + H(+). It participates in pyrimidine metabolism; dUMP biosynthesis; dUMP from dCTP (dUTP route): step 2/2. This enzyme is involved in nucleotide metabolism: it produces dUMP, the immediate precursor of thymidine nucleotides and it decreases the intracellular concentration of dUTP so that uracil cannot be incorporated into DNA. The protein is Deoxyuridine 5'-triphosphate nucleotidohydrolase of Nitrosospira multiformis (strain ATCC 25196 / NCIMB 11849 / C 71).